Reading from the N-terminus, the 300-residue chain is Pleckstrin homology domain-containing family A member 3 (300 aa).

Residues 1–93 form the PH domain; it reads MEGVLYKWTN…WLVALGSSKA (93 aa). Positions 1–100 are interaction with SACM1L; it reads MEGVLYKWTN…SKACLTDTRT (100 aa). Residues 97-300 form an interaction with VAPA and VAPB region; sequence DTRTKKEKEI…SEDTLPSFSS (204 aa). Positions 197 to 300 are disordered; the sequence is PVSPSPVQMM…SEDTLPSFSS (104 aa). Residues Ser236 and Ser244 each carry the phosphoserine modification. Residues 279-290 show a composition bias toward basic and acidic residues; that stretch reads EESRLMAKKQSE.

As to quaternary structure, interacts with GTP-bound ARF1. Interacts with SACM1L and VAPA and/or VAPB to form a ternary complex. Widely expressed.

The protein localises to the golgi apparatus. It localises to the trans-Golgi network membrane. Its function is as follows. Plays a role in regulation of vesicular cargo transport from the trans-Golgi network (TGN) to the plasma membrane. Regulates Golgi phosphatidylinositol 4-phosphate (PtdIns(4)P) levels and activates the PtdIns(4)P phosphatase activity of SACM1L when it binds PtdIns(4)P in 'trans' configuration. Binds preferentially to PtdIns(4)P. Negatively regulates APOB secretion from hepatocytes. The chain is Pleckstrin homology domain-containing family A member 3 (PLEKHA3) from Homo sapiens (Human).